The primary structure comprises 85 residues: SKP1-like protein 6 (85 aa).

Residues 65 to 85 (MMAANYLNIQSLLDLTFSNCR) form an interaction with the F-box domain of F-box proteins region.

Belongs to the SKP1 family. As to quaternary structure, part of a SCF (SKP1-cullin-F-box) protein ligase complex.

The protein resides in the nucleus. It functions in the pathway protein modification; protein ubiquitination. In terms of biological role, involved in ubiquitination and subsequent proteasomal degradation of target proteins. Together with CUL1, RBX1 and a F-box protein, it forms a SCF E3 ubiquitin ligase complex. The functional specificity of this complex depends on the type of F-box protein. In the SCF complex, it serves as an adapter that links the F-box protein to CUL1. The protein is SKP1-like protein 6 (ASK6) of Arabidopsis thaliana (Mouse-ear cress).